Here is an 80-residue protein sequence, read N- to C-terminus: MAERSQNLQDLFLNTVRKQKISLTIFLINGVKLTGVVTSFDNFCVLLRRDGHSQLVYKHAISTIMPGQPMQMFESEEAAS.

The 61-residue stretch at 10 to 70 (DLFLNTVRKQ…ISTIMPGQPM (61 aa)) folds into the Sm domain.

It belongs to the Hfq family. As to quaternary structure, homohexamer.

Functionally, RNA chaperone that binds small regulatory RNA (sRNAs) and mRNAs to facilitate mRNA translational regulation in response to envelope stress, environmental stress and changes in metabolite concentrations. Also binds with high specificity to tRNAs. The chain is RNA-binding protein Hfq from Rhizobium etli (strain CIAT 652).